Consider the following 602-residue polypeptide: Peptide-N(4)-(N-acetyl-beta-glucosaminyl)asparagine amidase (602 aa).

A Thioredoxin domain is found at 2–130 (PVREVSRLPE…EKKFLERFVG (129 aa)). Residues C189, C192, C222, and C225 each coordinate Zn(2+). Residue C248 is the Nucleophile of the active site. Active-site residues include H275 and D292. The 203-residue stretch at 400-602 (DMGGRTTGSK…ESMVVRVYMK (203 aa)) folds into the PAW domain.

The protein belongs to the transglutaminase-like superfamily. PNGase family. The cofactor is Zn(2+).

It localises to the cytoplasm. The protein resides in the endoplasmic reticulum. The enzyme catalyses Hydrolysis of an N(4)-(acetyl-beta-D-glucosaminyl)asparagine residue in which the glucosamine residue may be further glycosylated, to yield a (substituted) N-acetyl-beta-D-glucosaminylamine and a peptide containing an aspartate residue.. In terms of biological role, specifically deglycosylates the denatured form of N-linked glycoproteins in the cytoplasm and assists their proteasome-mediated degradation. Cleaves the beta-aspartyl-glucosamine (GlcNAc) of the glycan and the amide side chain of Asn, converting Asn to Asp. Prefers proteins containing high-mannose over those bearing complex type oligosaccharides. Can recognize misfolded proteins in the endoplasmic reticulum that are exported to the cytosol to be destroyed and deglycosylate them, while it has no activity toward native proteins. Deglycosylation is a prerequisite for subsequent proteasome-mediated degradation of some, but not all, misfolded glycoproteins. Also displays oxidoreductase (thioredoxin) activity. This Caenorhabditis briggsae protein is Peptide-N(4)-(N-acetyl-beta-glucosaminyl)asparagine amidase (png-1).